The chain runs to 256 residues: Autophagy-related protein 40 (256 aa).

The N-terminal stretch at 1-16 (MFNLILWPLFLLTSVA) is a signal peptide. The Lumenal segment spans residues 17-67 (IPLQLTLEVVYLTSSVDFSKASAAKTATSLGQSPVVITIYKSLLKYWSLYE). Residues 68-88 (FIHFIYLYTPIDAFLNFLPFT) form a helical membrane-spanning segment. Topologically, residues 89-256 (SLLMSFGSIC…DILDETTELD (168 aa)) are cytoplasmic. Residues 197-243 (QPQGDKNRYQNGDRESTKNGAAYQKSSQQSSSFEQNFTSTEFPNDYD) form a disordered region. Residues 199–213 (QGDKNRYQNGDREST) are compositionally biased toward basic and acidic residues. Over residues 222–238 (SSQQSSSFEQNFTSTEF) the composition is skewed to low complexity. Residues 242 to 245 (YDFM) carry the ATG8-binding motif.

Interacts with ATG8 and ATG11.

It is found in the endoplasmic reticulum membrane. Its subcellular location is the preautophagosomal structure membrane. Its function is as follows. Acts as a receptor for reticulophagy. Directs autophagic sequestration of folded tubules/sheets derived from the cortical endoplasmic reticulum (cER) and the cytoplasmic endoplasmic reticulum (cytoER) into autophagosomes. Is not required for the cytoplasm-to-vacuole targeting pathway, mitophagy, pexophagy, and non-selective autophagy. The protein is Autophagy-related protein 40 of Saccharomyces cerevisiae (strain ATCC 204508 / S288c) (Baker's yeast).